We begin with the raw amino-acid sequence, 34 residues long: U2-theraphotoxin-Bs1a (34 aa).

3 disulfides stabilise this stretch: cysteine 2–cysteine 16, cysteine 9–cysteine 21, and cysteine 15–cysteine 28.

Expressed by the venom gland.

It localises to the secreted. This chain is U2-theraphotoxin-Bs1a, found in Brachypelma smithi (Mexican red knee tarantula).